A 142-amino-acid polypeptide reads, in one-letter code: Small heat shock protein IbpB (142 aa).

One can recognise a sHSP domain in the interval 26–137; it reads AGESQSFPPY…APQRIAISER (112 aa).

It belongs to the small heat shock protein (HSP20) family. As to quaternary structure, homodimer. Forms homomultimers of about 100-150 subunits at optimal growth temperatures. Conformation changes to oligomers at high temperatures or high ionic concentrations. The decrease in size of the multimers is accompanied by an increase in chaperone activity.

It localises to the cytoplasm. Associates with aggregated proteins, together with IbpA, to stabilize and protect them from irreversible denaturation and extensive proteolysis during heat shock and oxidative stress. Aggregated proteins bound to the IbpAB complex are more efficiently refolded and reactivated by the ATP-dependent chaperone systems ClpB and DnaK/DnaJ/GrpE. Its activity is ATP-independent. In Klebsiella pneumoniae (strain 342), this protein is Small heat shock protein IbpB.